Consider the following 109-residue polypeptide: Flagellar hook-basal body complex protein FliE (109 aa).

The interval 1 to 38 is disordered; that stretch reads MQAIHNDKSLLSPFSELNTDNRTKREESGSTFKEQKGG. Residues 19 to 38 show a composition bias toward basic and acidic residues; sequence TDNRTKREESGSTFKEQKGG.

It belongs to the FliE family.

The protein resides in the bacterial flagellum basal body. In Helicobacter pylori (strain P12), this protein is Flagellar hook-basal body complex protein FliE.